Here is a 513-residue protein sequence, read N- to C-terminus: MATVEKKYPYALDSEGKAKYVPVWRFTQPHMMAFHLSWICFFMSFVATFAPASLAPVIRDDLFLTKSEVGNAGVSAVCGAIAARLFMGIFVDVVGPRYGAAAAMLMTAPAVFCMALVTDFSTFACVRFFIGLSLCMFVCCQFWCGTMFNVQIVGTANAIAAGWGNMGGGACHFIMPLIYQGIKDGGVPGYQAWRWAFFVPGGIYIVTATLTLLLGIDHPSGKDYRDLKKEGTLKAKGNMWPVIKCGLGNYRSWILALTYGYSFGVELTVDNVIVEYLFDQFGLNLAVAGALGAIFGLMNIFSRATGGMISDLIAKPFGMRGRLWVLWITQTLGGIFCIIMGKVSNSLTATIVIMIIFSIFCQQACGMHFGITPFVSRRAYGVVSGLVGAGGNVGAAITQAIWFSGTATWQINLSRPDSFVWMGVQAVALTVAVMFIWFPMWGSMFTGPREGVEEEDYYLREWSAEEVAQGLHQGSMRFAMESKSQRGYKDKRMLDAVGETASADVAAVKATVA.

12 helical membrane-spanning segments follow: residues 38–58 (WICF…APVI), 74–94 (VSAV…VDVV), 98–118 (YGAA…ALVT), 128–148 (FFIG…GTMF), 158–178 (AIAA…MPLI), 196–216 (AFFV…LLGI), 247–265 (LGNY…SFGV), 281–301 (FGLN…MNIF), 323–343 (LWVL…MGKV), 351–371 (IVIM…HFGI), 383–403 (VSGL…AIWF), and 419–439 (FVWM…IWFP).

This sequence belongs to the major facilitator superfamily. Nitrate/nitrite porter (TC 2.A.1.8) family.

The protein localises to the cell membrane. Functionally, involved in nitrate transport, but does not seem to be able to mediate transport by its own. Acts as a dual component transporter with NAR2 (system 2). Involved in a high affinity transport specific for nitrate. This is Nitrate transporter 2.2 from Chlamydomonas reinhardtii (Chlamydomonas smithii).